Consider the following 632-residue polypeptide: DNA mismatch repair protein MutL (632 aa).

The interval 376–397 (EQPQAEPRQSFTPGSGAGSGYQ) is disordered.

Belongs to the DNA mismatch repair MutL/HexB family.

Its function is as follows. This protein is involved in the repair of mismatches in DNA. It is required for dam-dependent methyl-directed DNA mismatch repair. May act as a 'molecular matchmaker', a protein that promotes the formation of a stable complex between two or more DNA-binding proteins in an ATP-dependent manner without itself being part of a final effector complex. The protein is DNA mismatch repair protein MutL of Pseudomonas entomophila (strain L48).